Reading from the N-terminus, the 440-residue chain is Methylthioribose-1-phosphate isomerase (440 aa).

The Proton donor role is filled by D285.

Belongs to the eIF-2B alpha/beta/delta subunits family. MtnA subfamily.

It is found in the cytoplasm. It localises to the nucleus. The catalysed reaction is 5-(methylsulfanyl)-alpha-D-ribose 1-phosphate = 5-(methylsulfanyl)-D-ribulose 1-phosphate. It functions in the pathway amino-acid biosynthesis; L-methionine biosynthesis via salvage pathway; L-methionine from S-methyl-5-thio-alpha-D-ribose 1-phosphate: step 1/6. Catalyzes the interconversion of methylthioribose-1-phosphate (MTR-1-P) into methylthioribulose-1-phosphate (MTRu-1-P). The protein is Methylthioribose-1-phosphate isomerase (mri1) of Botryotinia fuckeliana (strain B05.10) (Noble rot fungus).